Consider the following 706-residue polypeptide: Methionine--tRNA ligase (706 aa).

Positions 13-23 (PYANGNFHIGH) match the 'HIGH' region motif. Cys144, Cys147, Cys157, and Cys160 together coordinate Zn(2+). Positions 341–345 (KMSKS) match the 'KMSKS' region motif. Lys344 serves as a coordination point for ATP. In terms of domain architecture, tRNA-binding spans 600-706 (DFAKIDLRIA…PGATPGMRVR (107 aa)).

It belongs to the class-I aminoacyl-tRNA synthetase family. MetG type 1 subfamily. In terms of assembly, homodimer. Requires Zn(2+) as cofactor.

It localises to the cytoplasm. It carries out the reaction tRNA(Met) + L-methionine + ATP = L-methionyl-tRNA(Met) + AMP + diphosphate. Functionally, is required not only for elongation of protein synthesis but also for the initiation of all mRNA translation through initiator tRNA(fMet) aminoacylation. The sequence is that of Methionine--tRNA ligase from Paracidovorax citrulli (strain AAC00-1) (Acidovorax citrulli).